The chain runs to 197 residues: Phosphoheptose isomerase (197 aa).

Residues 37-197 form the SIS domain; the sequence is MLQCLMNDGK…CIDSVLLEGM (161 aa). 52–54 is a binding site for substrate; that stretch reads NGG. Residues His-61 and Glu-65 each coordinate Zn(2+). Residues Glu-65, 94–95, 120–122, Ser-125, and Gln-175 contribute to the substrate site; these read ND and STS. Positions 175 and 183 each coordinate Zn(2+).

The protein belongs to the SIS family. GmhA subfamily. Homotetramer. Requires Zn(2+) as cofactor.

The protein resides in the cytoplasm. The catalysed reaction is 2 D-sedoheptulose 7-phosphate = D-glycero-alpha-D-manno-heptose 7-phosphate + D-glycero-beta-D-manno-heptose 7-phosphate. Its pathway is carbohydrate biosynthesis; D-glycero-D-manno-heptose 7-phosphate biosynthesis; D-glycero-alpha-D-manno-heptose 7-phosphate and D-glycero-beta-D-manno-heptose 7-phosphate from sedoheptulose 7-phosphate: step 1/1. Functionally, catalyzes the isomerization of sedoheptulose 7-phosphate in D-glycero-D-manno-heptose 7-phosphate. This chain is Phosphoheptose isomerase, found in Neisseria gonorrhoeae (strain ATCC 700825 / FA 1090).